A 241-amino-acid polypeptide reads, in one-letter code: Phosphoadenosine 5'-phosphosulfate reductase (241 aa).

The disordered stretch occupies residues 221-241; that stretch reads GADPRSGRWRGKAKTECGLHA. Cysteine 237 serves as the catalytic Nucleophile; cysteine thiosulfonate intermediate.

This sequence belongs to the PAPS reductase family. CysH subfamily.

The protein resides in the cytoplasm. It catalyses the reaction [thioredoxin]-disulfide + sulfite + adenosine 3',5'-bisphosphate + 2 H(+) = [thioredoxin]-dithiol + 3'-phosphoadenylyl sulfate. Its pathway is sulfur metabolism; hydrogen sulfide biosynthesis; sulfite from sulfate: step 3/3. Functionally, catalyzes the formation of sulfite from phosphoadenosine 5'-phosphosulfate (PAPS) using thioredoxin as an electron donor. In Gloeobacter violaceus (strain ATCC 29082 / PCC 7421), this protein is Phosphoadenosine 5'-phosphosulfate reductase.